Reading from the N-terminus, the 783-residue chain is Spindle pole body protein ppc89 (783 aa).

S157 carries the phosphoserine modification. 4 disordered regions span residues 180–216 (FDSP…ETPS), 434–458 (KESN…MNEA), 471–504 (ENKS…PTSG), and 528–610 (LSQS…MKGN). Polar residues-rich tracts occupy residues 201 to 216 (RSKT…ETPS), 437 to 453 (NVTS…SKPL), and 474 to 504 (SGAN…PTSG). The segment covering 536–551 (PVKHRKRRPKSKRRIT) has biased composition (basic residues). A compositionally biased stretch (acidic residues) spans 566 to 590 (ESDEGSEEISLDSEYSDILSDDGDF).

It is found in the cytoplasm. It localises to the cytoskeleton. The protein resides in the microtubule organizing center. The protein localises to the spindle pole body. In terms of biological role, has a role in meiosis. This Schizosaccharomyces pombe (strain 972 / ATCC 24843) (Fission yeast) protein is Spindle pole body protein ppc89 (ppc89).